The chain runs to 347 residues: Melanoma-associated antigen B1 (347 aa).

Positions 1-17 (MPRGQKSKLRAREKRRK) are enriched in basic residues. The disordered stretch occupies residues 1–104 (MPRGQKSKLR…QATTSTESSV (104 aa)). Polar residues-rich tracts occupy residues 39–53 (PSSS…TSSP) and 89–102 (ENAS…STES). Residues 108–307 (VAWEAGMLMH…RDFPSHYEEA (200 aa)) enclose the MAGE domain. Residues 315 to 347 (AQVRSSVRARRRTTATTFRARSRAPFSRSSHPM) are disordered. The span at 328–347 (TATTFRARSRAPFSRSSHPM) shows a compositional bias: low complexity.

Expressed only in testis.

The polypeptide is Melanoma-associated antigen B1 (MAGEB1) (Homo sapiens (Human)).